A 197-amino-acid polypeptide reads, in one-letter code: Phosphoheptose isomerase (197 aa).

An SIS domain is found at 34–196; that stretch reads MVQCLLGGNK…DRTLFPQDEQ (163 aa). A substrate-binding site is contributed by 49-51; it reads NGG. The Zn(2+) site is built by histidine 58 and glutamate 62. Substrate is bound by residues glutamate 62, 91–92, 117–119, serine 122, and glutamine 172; these read ND and STS. Zn(2+) is bound by residues glutamine 172 and histidine 180.

Belongs to the SIS family. GmhA subfamily. In terms of assembly, homotetramer. The cofactor is Zn(2+).

Its subcellular location is the cytoplasm. The enzyme catalyses 2 D-sedoheptulose 7-phosphate = D-glycero-alpha-D-manno-heptose 7-phosphate + D-glycero-beta-D-manno-heptose 7-phosphate. It participates in carbohydrate biosynthesis; D-glycero-D-manno-heptose 7-phosphate biosynthesis; D-glycero-alpha-D-manno-heptose 7-phosphate and D-glycero-beta-D-manno-heptose 7-phosphate from sedoheptulose 7-phosphate: step 1/1. Catalyzes the isomerization of sedoheptulose 7-phosphate in D-glycero-D-manno-heptose 7-phosphate. The protein is Phosphoheptose isomerase of Shewanella piezotolerans (strain WP3 / JCM 13877).